Here is a 627-residue protein sequence, read N- to C-terminus: Transducer protein MpcT (627 aa).

2 helical membrane-spanning segments follow: residues 28 to 48 and 55 to 75; these read MLTAVGLQFLAAGGMAFLTVF and LIGVGGMLALSVVAFYNTYLI. 2 consecutive HAMP domains span residues 78-132 and 192-247; these read ADFV…VASR and EQLR…DTIS. The Methyl-accepting transducer domain maps to 266 to 502; the sequence is RVDAVADRSA…DVVGMVEEVA (237 aa). A glutamate methyl ester (Glu) mark is found at Glu-310, Glu-416, and Glu-507. Disordered stretches follow at residues 505–527 and 557–627; these read SEETAAESDTVADNAAEQTDATD and GTAD…ADSQ. Residues 580-590 show a composition bias toward low complexity; the sequence is AAAVVDQPQPA.

This sequence belongs to the methyl-accepting chemotaxis (MCP) protein family. As to quaternary structure, interacts with CheA, CheY and CheW1. In terms of processing, methylated by CheR.

The protein localises to the cell membrane. Mediates bacteriorhodopsin- and halorhodopsin-dependent photoresponses by detecting membrane potential changes. Probably transduces the signal to the histidine kinase CheA. The polypeptide is Transducer protein MpcT (mpcT) (Halobacterium salinarum (strain ATCC 29341 / DSM 671 / R1)).